The following is a 44-amino-acid chain: Cuticle protein CP459 (44 aa).

2 consecutive repeat copies span residues 3–20 and 27–44.

In terms of tissue distribution, calcified shell.

The protein is Cuticle protein CP459 of Cancer pagurus (Rock crab).